We begin with the raw amino-acid sequence, 390 residues long: 8-amino-7-oxononanoate synthase (390 aa).

Position 19 (Arg-19) interacts with substrate. 106 to 107 (GY) lines the pyridoxal 5'-phosphate pocket. His-131 is a binding site for substrate. Residues Ser-176, His-204, and Thr-233 each coordinate pyridoxal 5'-phosphate. Position 236 is an N6-(pyridoxal phosphate)lysine (Lys-236). Thr-350 contributes to the substrate binding site.

The protein belongs to the class-II pyridoxal-phosphate-dependent aminotransferase family. BioF subfamily. Homodimer. The cofactor is pyridoxal 5'-phosphate.

The catalysed reaction is 6-carboxyhexanoyl-[ACP] + L-alanine + H(+) = (8S)-8-amino-7-oxononanoate + holo-[ACP] + CO2. It participates in cofactor biosynthesis; biotin biosynthesis. In terms of biological role, catalyzes the decarboxylative condensation of pimeloyl-[acyl-carrier protein] and L-alanine to produce 8-amino-7-oxononanoate (AON), [acyl-carrier protein], and carbon dioxide. This Pseudomonas putida (strain ATCC 47054 / DSM 6125 / CFBP 8728 / NCIMB 11950 / KT2440) protein is 8-amino-7-oxononanoate synthase.